The primary structure comprises 362 residues: 3-dehydroquinate synthase (362 aa).

NAD(+)-binding positions include Asp-71–Lys-76, Gly-105–Asp-109, Thr-129–Thr-130, Lys-142, Lys-151, and Cys-169–Thr-172. 3 residues coordinate Zn(2+): Glu-184, His-247, and His-264.

It belongs to the sugar phosphate cyclases superfamily. Dehydroquinate synthase family. Co(2+) is required as a cofactor. Requires Zn(2+) as cofactor. It depends on NAD(+) as a cofactor.

The protein resides in the cytoplasm. The catalysed reaction is 7-phospho-2-dehydro-3-deoxy-D-arabino-heptonate = 3-dehydroquinate + phosphate. Its pathway is metabolic intermediate biosynthesis; chorismate biosynthesis; chorismate from D-erythrose 4-phosphate and phosphoenolpyruvate: step 2/7. Functionally, catalyzes the conversion of 3-deoxy-D-arabino-heptulosonate 7-phosphate (DAHP) to dehydroquinate (DHQ). This chain is 3-dehydroquinate synthase, found in Salmonella arizonae (strain ATCC BAA-731 / CDC346-86 / RSK2980).